The sequence spans 236 residues: tRNA (guanine-N(7)-)-methyltransferase (236 aa).

Residues E68, E93, D120, and D143 each coordinate S-adenosyl-L-methionine. D143 is an active-site residue. Residues K147, D179, and 212–215 each bind substrate; that span reads TKFE.

This sequence belongs to the class I-like SAM-binding methyltransferase superfamily. TrmB family.

It carries out the reaction guanosine(46) in tRNA + S-adenosyl-L-methionine = N(7)-methylguanosine(46) in tRNA + S-adenosyl-L-homocysteine. The protein operates within tRNA modification; N(7)-methylguanine-tRNA biosynthesis. Catalyzes the formation of N(7)-methylguanine at position 46 (m7G46) in tRNA. The chain is tRNA (guanine-N(7)-)-methyltransferase from Nitrosococcus oceani (strain ATCC 19707 / BCRC 17464 / JCM 30415 / NCIMB 11848 / C-107).